A 194-amino-acid polypeptide reads, in one-letter code: Cytochrome bo(3) ubiquinol oxidase subunit 3 (194 aa).

Topologically, residues 1 to 18 are cytoplasmic; sequence MKKKYKIDTNIFSKELLG. Residues 19 to 41 form a helical membrane-spanning segment; it reads FWLYLMSDCIIFCTLFSVYFILV. Residues 42–55 are Extracellular-facing; sequence DNVAQGPSGHNIFQ. The chain crosses the membrane as a helical span at residues 56–78; sequence NNLIIIETFLLLFSSFSCNLVLF. Residues 79 to 84 are Cytoplasmic-facing; it reads EMKNKN. A helical membrane pass occupies residues 85–107; it reads LYMVFLWLGITFLLGLLFVFLEL. Topologically, residues 108–126 are extracellular; the sequence is FEFFHLINLGFGPTRSGFL. Residues 127 to 149 traverse the membrane as a helical segment; sequence SSFFVLIATHGIHVISGLIWIIV. The Cytoplasmic portion of the chain corresponds to 150–169; sequence MIKYVYTFNITNLIYYRMLC. A helical membrane pass occupies residues 170 to 192; sequence LNLFWHFLDIVWVFIFSFVYLFG. Over 193–194 the chain is Extracellular; it reads MV.

The protein belongs to the cytochrome c oxidase subunit 3 family. Heterooctamer of two A chains, two B chains, two C chains and two D chains.

It localises to the cell membrane. Its function is as follows. Cytochrome bo(3) ubiquinol terminal oxidase is the component of the aerobic respiratory chain of E.coli that predominates when cells are grown at high aeration. Has proton pump activity across the membrane in addition to electron transfer, pumping 2 protons/electron. The chain is Cytochrome bo(3) ubiquinol oxidase subunit 3 (cyoC) from Buchnera aphidicola subsp. Baizongia pistaciae (strain Bp).